The sequence spans 159 residues: Large ribosomal subunit protein bL17 (159 aa).

A compositionally biased stretch (low complexity) spans 124 to 135 (EANRATRAAASK). The segment at 124–159 (EANRATRAAASKQAEEAKAEEAEATEAEAEETTEEK) is disordered. A compositionally biased stretch (acidic residues) spans 145-159 (AEATEAEAEETTEEK).

The protein belongs to the bacterial ribosomal protein bL17 family. Part of the 50S ribosomal subunit. Contacts protein L32.

The chain is Large ribosomal subunit protein bL17 from Corynebacterium aurimucosum (strain ATCC 700975 / DSM 44827 / CIP 107346 / CN-1) (Corynebacterium nigricans).